The sequence spans 299 residues: Fluorinase (299 aa).

S-adenosyl-L-methionine is bound by residues Asp15, 20–22 (DDS), Tyr76, Ser157, Asp210, Asn215, 269–270 (SR), and 277–279 (RNA).

Belongs to the SAM hydrolase / SAM-dependent halogenase family.

It carries out the reaction fluoride + S-adenosyl-L-methionine = 5'-deoxy-5'-fluoroadenosine + L-methionine. With respect to regulation, activity is not severely affected by most metal ions (Mg(2+), Mn(2+), Co(2+) and Fe(2+)), but both Cu(2+) and Zn(2+) are strong inhibitors. Functionally, catalyzes the formation of a C-F bond by combining S-adenosyl-L-methionine (SAM) and fluoride to generate 5'-fluoro-5'-deoxyadenosine (5'-FDA) and L-methionine. In Actinopolyspora mzabensis, this protein is Fluorinase.